The primary structure comprises 914 residues: Transcription factor AZF1 (914 aa).

Disordered stretches follow at residues 1-63 (MPPP…ESIS), 93-124 (STGG…SQIG), and 138-275 (QQLQ…NSNQ). Over residues 13–34 (QAGQNESQNQSSGEAGEQNQEH) the composition is skewed to polar residues. Residues 44-56 (QSQPASSQPQHQQ) show a composition bias toward low complexity. Serine 61 is modified (phosphoserine). Residues 107 to 116 (PRLSTSSTHQ) are compositionally biased toward polar residues. The segment at 136–158 (QQQQLQNQHRQQQQQQQQQSHQQ) is polyglutamine domain. Low complexity predominate over residues 138–158 (QQLQNQHRQQQQQQQQQSHQQ). The span at 164–194 (PSFSTGLTGSSSQYQFLPRNDNTSQPPSKRN) shows a compositional bias: polar residues. Composition is skewed to low complexity over residues 206–222 (FEFF…FQPS) and 245–275 (SNGT…NSNQ). Residues serine 286 and serine 325 each carry the phosphoserine modification. The disordered stretch occupies residues 326–415 (LSVNNKANGD…STDTTSNSRK (90 aa)). Low complexity predominate over residues 359–390 (DSSNNNNNNNNNNNNENNNDNNNDNNDNSINS). Residues 362 to 386 (NNNNNNNNNNNNENNNDNNNDNNDN) are polyasparagine domain. Polar residues predominate over residues 391 to 412 (ATSTNIPNQEDHSLASTDTTSN). 4 consecutive C2H2-type zinc fingers follow at residues 593-615 (HECP…VRSH), 621-643 (FVCD…ERLH), 649-671 (YSCD…LVTH), and 677-702 (FVCK…NRFH). Disordered stretches follow at residues 743–812 (GIKG…SPTQ) and 853–877 (RLGS…APGV). A compositionally biased stretch (polar residues) spans 754–770 (KKSTISSPENHPASTIL). Composition is skewed to low complexity over residues 771-782 (NPNTNANNAIAN), 796-809 (SSSN…SMIS), and 856-868 (SSSS…NNSN).

The protein resides in the nucleus. It localises to the cytoplasm. The protein localises to the cytosol. Functionally, transcription factor involved in the diauxic shift. In the presence of glucose, activates carbon and energy metabolism genes, and in te presence of glycerol-lactate, activates genes needed for cell wall maintenance. Binds to DNA elements with the sequence AAAAGAAA (A4GA3), a motif enriched in the promoters of AZF1-sensitive genes. Required for glucose induction of CLN3 transcription. Also required for proper FLO11 expression. May also function as a corepressor. Its function is as follows. As an intrinsically disordered protein, AZF1 is capable of forming the prion [AZF1+] that confers resistance to the drug radicicol in a gain-of-function manner but decreases the expression of AZF1's target genes. The protein is Transcription factor AZF1 of Saccharomyces cerevisiae (strain ATCC 204508 / S288c) (Baker's yeast).